Reading from the N-terminus, the 280-residue chain is 4-diphosphocytidyl-2-C-methyl-D-erythritol kinase (280 aa).

The active site involves lysine 8. 91 to 101 is an ATP binding site; it reads PVSAGLAGGST. Aspartate 133 is a catalytic residue.

The protein belongs to the GHMP kinase family. IspE subfamily.

It catalyses the reaction 4-CDP-2-C-methyl-D-erythritol + ATP = 4-CDP-2-C-methyl-D-erythritol 2-phosphate + ADP + H(+). It participates in isoprenoid biosynthesis; isopentenyl diphosphate biosynthesis via DXP pathway; isopentenyl diphosphate from 1-deoxy-D-xylulose 5-phosphate: step 3/6. Catalyzes the phosphorylation of the position 2 hydroxy group of 4-diphosphocytidyl-2C-methyl-D-erythritol. The protein is 4-diphosphocytidyl-2-C-methyl-D-erythritol kinase of Clostridium botulinum (strain Alaska E43 / Type E3).